The chain runs to 441 residues: Xylose isomerase 1 (441 aa).

Residues His105 and Asp108 contribute to the active site. Mg(2+) contacts are provided by Glu236, Glu272, His275, Asp300, Asp311, Asp313, and Asp343.

Belongs to the xylose isomerase family. In terms of assembly, homotetramer. Requires Mg(2+) as cofactor.

The protein localises to the cytoplasm. It catalyses the reaction alpha-D-xylose = alpha-D-xylulofuranose. This chain is Xylose isomerase 1 (xylA1), found in Xanthomonas axonopodis pv. citri (strain 306).